Here is a 419-residue protein sequence, read N- to C-terminus: Histidine--tRNA ligase (419 aa).

This sequence belongs to the class-II aminoacyl-tRNA synthetase family. As to quaternary structure, homodimer.

The protein localises to the cytoplasm. It catalyses the reaction tRNA(His) + L-histidine + ATP = L-histidyl-tRNA(His) + AMP + diphosphate + H(+). This chain is Histidine--tRNA ligase, found in Halothermothrix orenii (strain H 168 / OCM 544 / DSM 9562).